Consider the following 640-residue polypeptide: Putative solute carrier organic anion transporter family member 1B7 (640 aa).

Over 1-16 (MKISTTQIERRFEISS) the chain is Extracellular. A helical transmembrane segment spans residues 17–37 (SLVGLIDGSFEIGNLFVIVFV). Over 38 to 49 (SYFGSKLHRPKL) the chain is Cytoplasmic. The chain crosses the membrane as a helical span at residues 50–70 (IGIGCFLMGTGSILMALPHFF). Over 71 to 123 (MGYYRYSKETNIDPSENSTSNLPNCLINQMLSLNRTPSEIIERGCVKESGSHM) the chain is Extracellular. Residues 124 to 144 (WIYVFMGNMLRGIGETPIVPL) traverse the membrane as a helical segment. The Cytoplasmic portion of the chain corresponds to 145-159 (GISYIDDFAKEGHSS). A helical membrane pass occupies residues 160-180 (LYLGTVNVMGMTGLVFAFMLG). The Extracellular segment spans residues 181-211 (SLFAKMYVDIGYVDLSTIRITPKDSRWVGAW). A helical membrane pass occupies residues 212–232 (WLGFLVSGIVSIISSIPFFFL). The Cytoplasmic segment spans residues 233–292 (PLNPNKPQKERKVSLFLHVLKTNDKRNQIANLTNRRKYITKNVTGFFQSLKSILTNPLYV). A Phosphoserine modification is found at serine 246. A helical membrane pass occupies residues 293–313 (IFVIFTLLHMSSYIASLTYII). Residues 314–329 (KMVEQQYGWSASKTNF) are Extracellular-facing. The chain crosses the membrane as a helical span at residues 330–350 (LLGVLALPAVAIGMFSGGYII). Over 351–362 (KKFKLSLVGLAK) the chain is Cytoplasmic. The helical transmembrane segment at 363 to 383 (LAFCSATVHLLSQVLYFFLIC) threads the bilayer. At 384 to 492 (ESKSVAGLTL…CTRKSYVYFV (109 aa)) the chain is on the extracellular side. Positions 406 to 461 (DVPLSYCNSECNCDESQWEPVCGNNGITYLSPCLAGCKSSSGNKEPIVFYNCSCVE) constitute a Kazal-like domain. 3 disulfide bridges follow: cysteine 412/cysteine 442, cysteine 418/cysteine 438, and cysteine 427/cysteine 459. A helical transmembrane segment spans residues 493–513 (IQVLDAFLCAVGLTSYSVLVI). The Cytoplasmic portion of the chain corresponds to 514 to 521 (RIVQPELK). The chain crosses the membrane as a helical span at residues 522–542 (ALAIGFHSMIMRSLGGILVPI). At 543-577 (YFGALIDTTCMKWSTNSCGARGACRIYNSTYLGRA) the chain is on the extracellular side. A helical transmembrane segment spans residues 578 to 598 (FFGLKVALIFPVLVLLTVFIF). The Cytoplasmic segment spans residues 599–640 (VVRKKSHGKDTKVLENERQVMDEANLEFLNDSEHFVPSAEEQ). Serine 636 carries the phosphoserine modification.

This sequence belongs to the organo anion transporter (TC 2.A.60) family.

The protein localises to the cell membrane. The sequence is that of Putative solute carrier organic anion transporter family member 1B7 (SLCO1B7) from Homo sapiens (Human).